The primary structure comprises 207 residues: Guanylate kinase (207 aa).

The 181-residue stretch at 4-184 (GTLYIVSAPS…ALTDLKTIIR (181 aa)) folds into the Guanylate kinase-like domain. 11–18 (APSGAGKS) is a binding site for ATP.

The protein belongs to the guanylate kinase family.

The protein localises to the cytoplasm. It catalyses the reaction GMP + ATP = GDP + ADP. Its function is as follows. Essential for recycling GMP and indirectly, cGMP. The protein is Guanylate kinase of Escherichia coli O6:K15:H31 (strain 536 / UPEC).